We begin with the raw amino-acid sequence, 202 residues long: MKLLFDLFPVILFFATFKYAEKSPELAASWMGSLLGFVPDDIKLAPILLATVVVIAATVAQIIWVHFRHGKVDKMLWVSLVLVVVFGGLTLAFQNEAFIKWKPTILYWVFAGSMIFSAFILKKNPIKAMLGEQLTLPEPVWGKVNLSWIGFFLFMGALNLFVAFNFPTDTWVNFKLFGGMGLMLVFVLGQGMLLSKYVEEEK.

5 helical membrane passes run 47–67 (ILLA…WVHF), 75–95 (MLWV…AFQN), 101–121 (WKPT…AFIL), 146–166 (LSWI…AFNF), and 174–194 (FKLF…GMLL).

Belongs to the YciB family.

It localises to the cell inner membrane. Functionally, plays a role in cell envelope biogenesis, maintenance of cell envelope integrity and membrane homeostasis. This chain is Inner membrane-spanning protein YciB, found in Dechloromonas aromatica (strain RCB).